A 204-amino-acid polypeptide reads, in one-letter code: Urease accessory protein UreG (204 aa).

11 to 18 (GPVGAGKT) lines the GTP pocket.

Belongs to the SIMIBI class G3E GTPase family. UreG subfamily. Homodimer. UreD, UreF and UreG form a complex that acts as a GTP-hydrolysis-dependent molecular chaperone, activating the urease apoprotein by helping to assemble the nickel containing metallocenter of UreC. The UreE protein probably delivers the nickel.

Its subcellular location is the cytoplasm. Facilitates the functional incorporation of the urease nickel metallocenter. This process requires GTP hydrolysis, probably effectuated by UreG. The polypeptide is Urease accessory protein UreG (Staphylococcus aureus (strain MSSA476)).